The sequence spans 285 residues: Para-Rep C6 (285 aa).

The CRESS-DNA virus Rep endonuclease domain occupies 3-99 (TRQSTSWVFT…VAGPWEYGLF (97 aa)). The RCR-1 motif lies at 10 to 13 (VFTL). A divalent metal cation contacts are provided by glutamate 36 and histidine 42. The RCR-2 motif lies at 42–44 (HLQ). A Nuclear localization signal motif is present at residues 52-74 (RNTTLRQAKYIFNGLNPHLEIAR). Tyrosine 82 (for DNA cleavage activity) is an active-site residue. An RCR-3 motif is present at residues 82–85 (YAMK). Position 87 (aspartate 87) interacts with a divalent metal cation. The Nuclear localization signal motif lies at 99-105 (FIKRGSH). 175-183 (GPAGNEGKS) provides a ligand contact to ATP.

It belongs to the nanoviridea/circoviridae replication-associated protein family. As to quaternary structure, homooligomer (Potential). Rep binds to repeated DNA motifs (iterons). Requires Mg(2+) as cofactor. Mn(2+) is required as a cofactor.

It is found in the host nucleus. It carries out the reaction ATP + H2O = ADP + phosphate + H(+). Initiates and terminates the replication only of its own subviral DNA molecule. The closed circular ssDNA genome is first converted to a superhelical dsDNA. Rep binds a specific hairpin at the genome origin of replication. Introduces an endonucleolytic nick within the intergenic region of the genome, thereby initiating the rolling circle replication (RCR). Following cleavage, binds covalently to the 5'-phosphate of DNA as a tyrosyl ester. The cleavage gives rise to a free 3'-OH that serves as a primer for the cellular DNA polymerase. The polymerase synthesizes the (+) strand DNA by rolling circle mechanism. After one round of replication, a Rep-catalyzed nucleotidyl transfer reaction releases a circular single-stranded virus genome, thereby terminating the replication. Displays origin-specific DNA cleavage, nucleotidyl transferase, ATPase and helicase activities. This Subterranean clover stunt C6 alphasatellite (SCSC6A) protein is Para-Rep C6 (C6).